Reading from the N-terminus, the 451-residue chain is Gamma-aminobutyric acid receptor subunit alpha-2 (451 aa).

Residues 1–28 form the signal peptide; the sequence is MKTKLNIYNMQFLLFVFLVWDPARLVLA. At 29–249 the chain is on the extracellular side; that stretch reads NIQEDEAKNN…MTAHFHLKRK (221 aa). An N-linked (GlcNAc...) asparagine glycan is attached at Asn-38. Arg-94 contributes to the 4-aminobutanoate binding site. N-linked (GlcNAc...) asparagine glycosylation occurs at Asn-138. Thr-157 contributes to the 4-aminobutanoate binding site. A disulfide bridge links Cys-166 with Cys-180. The chain crosses the membrane as a helical span at residues 250-270; it reads IGYFVIQTYLPCIMTVILSQV. Topologically, residues 271–280 are cytoplasmic; that stretch reads SFWLNRESVP. Residues 281 to 300 traverse the membrane as a helical segment; it reads ARTVFGVTTVLTMTTLSISA. Over 301–311 the chain is Extracellular; it reads RNSLPKVAYAT. Residues 312 to 332 form a helical membrane-spanning segment; sequence AMDWFIAVCYAFVFSALIEFA. Residues 333–420 lie on the Cytoplasmic side of the membrane; it reads TVNYFTKRGW…FNSVSKIDRM (88 aa). Residues 421–441 form a helical membrane-spanning segment; that stretch reads SRIVFPVLFGTFNLVYWATYL. Residues 442–451 lie on the Extracellular side of the membrane; that stretch reads NREPVLGVSP.

The protein belongs to the ligand-gated ion channel (TC 1.A.9) family. Gamma-aminobutyric acid receptor (TC 1.A.9.5) subfamily. GABRA2 sub-subfamily. In terms of assembly, heteropentamer, formed by a combination of alpha (GABRA1-6), beta (GABRB1-3), gamma (GABRG1-3), delta (GABRD), epsilon (GABRE), rho (GABRR1-3), pi (GABRP) and theta (GABRQ) subunits, each subunit exhibiting distinct physiological and pharmacological properties. Interacts with UBQLN1. Interacts with KIF21B. Interacts with LHFPL4. Interacts with SHISA7; interaction leads to the regulation of GABA(A) receptor trafficking, channel deactivation kinetics and pharmacology. In terms of processing, glycosylated.

Its subcellular location is the postsynaptic cell membrane. The protein localises to the cell membrane. It is found in the cytoplasmic vesicle membrane. The protein resides in the cell projection. It localises to the dendrite. It catalyses the reaction chloride(in) = chloride(out). With respect to regulation, activated by pentobarbital. Inhibited by the antagonist bicuculline. Functionally, alpha subunit of the heteropentameric ligand-gated chloride channel gated by gamma-aminobutyric acid (GABA), a major inhibitory neurotransmitter in the brain. GABA-gated chloride channels, also named GABA(A) receptors (GABAAR), consist of five subunits arranged around a central pore and contain GABA active binding site(s) located at the alpha and beta subunit interfaces. When activated by GABA, GABAARs selectively allow the flow of chloride anions across the cell membrane down their electrochemical gradient. Chloride influx into the postsynaptic neuron following GABAAR opening decreases the neuron ability to generate a new action potential, thereby reducing nerve transmission. The alpha-2 subunit exhibits synaptogenic activity together with beta-2 and very little to no activity together with beta-3, the gamma-2 subunit being necessary but not sufficient to induce rapid synaptic contacts formation. The sequence is that of Gamma-aminobutyric acid receptor subunit alpha-2 from Homo sapiens (Human).